Consider the following 161-residue polypeptide: Endoribonuclease YbeY (161 aa).

Zn(2+) contacts are provided by His121, His125, and His131.

It belongs to the endoribonuclease YbeY family. Requires Zn(2+) as cofactor.

It localises to the cytoplasm. Functionally, single strand-specific metallo-endoribonuclease involved in late-stage 70S ribosome quality control and in maturation of the 3' terminus of the 16S rRNA. This chain is Endoribonuclease YbeY, found in Stenotrophomonas maltophilia (strain K279a).